We begin with the raw amino-acid sequence, 77 residues long: U14-theraphotoxin-Cg1b (77 aa).

A signal peptide spans 1–21; that stretch reads MKTSVLLVILGIAAITVQCTA. The propeptide occupies 22-49; the sequence is SESVEQDSLRTFVDAVLGWNAEMASEAR. Disulfide bonds link Cys50–Cys64, Cys57–Cys69, and Cys63–Cys75.

This sequence belongs to the neurotoxin 10 (Hwtx-1) family. 65 (Jztx-21) subfamily. Expressed by the venom gland.

The protein localises to the secreted. Its function is as follows. Probable ion channel inhibitor. In Chilobrachys guangxiensis (Chinese earth tiger tarantula), this protein is U14-theraphotoxin-Cg1b.